A 719-amino-acid chain; its full sequence is DNA ligase (719 aa).

Residues 42 to 46 (DAAYD), 92 to 93 (SL), and E126 each bind NAD(+). K128 (N6-AMP-lysine intermediate) is an active-site residue. 4 residues coordinate NAD(+): R149, E185, K301, and K325. C430, C433, C448, and C454 together coordinate Zn(2+). The region spanning 640–719 (ATGSPVEGKT…DDWFKLVGED (80 aa)) is the BRCT domain.

The protein belongs to the NAD-dependent DNA ligase family. LigA subfamily. The cofactor is Mg(2+). It depends on Mn(2+) as a cofactor.

It carries out the reaction NAD(+) + (deoxyribonucleotide)n-3'-hydroxyl + 5'-phospho-(deoxyribonucleotide)m = (deoxyribonucleotide)n+m + AMP + beta-nicotinamide D-nucleotide.. DNA ligase that catalyzes the formation of phosphodiester linkages between 5'-phosphoryl and 3'-hydroxyl groups in double-stranded DNA using NAD as a coenzyme and as the energy source for the reaction. It is essential for DNA replication and repair of damaged DNA. The polypeptide is DNA ligase (Brucella melitensis biotype 2 (strain ATCC 23457)).